The following is a 211-amino-acid chain: Small ribosomal subunit protein uS3c (211 aa).

The 71-residue stretch at 39 to 109 (IREFAESRLP…NVALYVTKTQ (71 aa)) folds into the KH type-2 domain.

This sequence belongs to the universal ribosomal protein uS3 family. In terms of assembly, part of the 30S ribosomal subunit.

Its subcellular location is the plastid. The protein localises to the chloroplast. This chain is Small ribosomal subunit protein uS3c (rps3), found in Ostreococcus tauri.